The following is a 930-amino-acid chain: Serine/threonine-protein kinase PknD (930 aa).

Positions 4–291 (YDIIRMIGKG…ALKADIEQHL (288 aa)) constitute a Protein kinase domain. ATP-binding positions include 10–18 (IGKGGMGEV) and Lys33. The Proton acceptor role is filled by Asp138.

Belongs to the protein kinase superfamily. Ser/Thr protein kinase family. Post-translationally, autophosphorylated on serine and threonine residues.

The catalysed reaction is L-seryl-[protein] + ATP = O-phospho-L-seryl-[protein] + ADP + H(+). It catalyses the reaction L-threonyl-[protein] + ATP = O-phospho-L-threonyl-[protein] + ADP + H(+). Together with the serine/threonine kinase Pkn1, may play a role in the specific interactions with host proteins during intracellular growth. In Chlamydia caviae (strain ATCC VR-813 / DSM 19441 / 03DC25 / GPIC) (Chlamydophila caviae), this protein is Serine/threonine-protein kinase PknD.